A 103-amino-acid polypeptide reads, in one-letter code: Histone H4 (103 aa).

Residues 1–14 (MSGRGKGGKGLGKG) are compositionally biased toward gly residues. The tract at residues 1–20 (MSGRGKGGKGLGKGGAKRHR) is disordered. Position 2 is an N-acetylserine (S2). S2 carries the post-translational modification Phosphoserine. R4 bears the Asymmetric dimethylarginine; by PRMT1; alternate mark. Position 4 is a citrulline; alternate (R4). R4 bears the Omega-N-methylarginine; by PRMT1; alternate mark. The residue at position 4 (R4) is a Symmetric dimethylarginine; by PRMT5 and PRMT7; alternate. An N6-(2-hydroxyisobutyryl)lysine; alternate mark is found at K6, K9, K13, and K17. At K6 the chain carries N6-acetyl-N6-methyllysine; alternate. N6-acetyllysine is present on residues K6, K9, K13, and K17. 4 positions are modified to N6-butyryllysine; alternate: K6, K9, K13, and K17. K6 carries the N6-glutaryllysine; alternate modification. N6-lactoyllysine; alternate occurs at positions 6, 9, 13, and 17. Position 9 is an N6-propionyllysine; alternate (K9). K13 is modified (N6-acetyl-N6-methyllysine; alternate). An N6-glutaryllysine; alternate modification is found at K13. The residue at position 13 (K13) is an N6-methyllysine; alternate. Position 17 is an N6-propionyllysine; alternate (K17). Residues 17-21 (KRHRK) mediate DNA binding. K21 bears the N6-methyllysine; alternate mark. The residue at position 21 (K21) is an N6,N6,N6-trimethyllysine; alternate. N6,N6-dimethyllysine; alternate is present on K21. K21 is modified (N6-methylated lysine). N6-(2-hydroxyisobutyryl)lysine; alternate is present on residues K32 and K45. The residue at position 32 (K32) is an N6-acetyllysine. Residues K32 and K45 each carry the N6-butyryllysine; alternate modification. K32 is modified (N6-glutaryllysine; alternate). At K32 the chain carries N6-lactoyllysine; alternate. 2 positions are modified to N6-propionyllysine; alternate: K32 and K45. K32 bears the N6-succinyllysine; alternate mark. Residue K32 forms a Glycyl lysine isopeptide (Lys-Gly) (interchain with G-Cter in UFM1); alternate linkage. S48 carries the post-translational modification Phosphoserine; by PAK2. Y52 carries the phosphotyrosine modification. Residue K60 is modified to N6-acetyllysine. An N6-glutaryllysine; alternate mark is found at K60, K78, and K80. The residue at position 60 (K60) is an N6-(2-hydroxyisobutyryl)lysine. Residues K78 and K80 each carry the N6-(2-hydroxyisobutyryl)lysine; alternate modification. K78 and K80 each carry N6-butyryllysine; alternate. K78 carries the N6-lactoyllysine; alternate modification. An N6-propionyllysine; alternate mark is found at K78 and K80. At K78 the chain carries N6-succinyllysine. Residue K80 is modified to N6-acetyllysine. Phosphotyrosine is present on Y89. Position 92 is an N6-(2-hydroxyisobutyryl)lysine; alternate (K92). Residue K92 is modified to N6-butyryllysine; alternate. At K92 the chain carries N6-glutaryllysine; alternate. N6-lactoyllysine; alternate is present on K92. The residue at position 92 (K92) is an N6-propionyllysine; alternate. N6-succinyllysine; alternate is present on K92. K92 bears the N6-acetyllysine; alternate mark. A Glycyl lysine isopeptide (Lys-Gly) (interchain with G-Cter in ubiquitin); alternate cross-link involves residue K92.

Belongs to the histone H4 family. As to quaternary structure, the nucleosome is a histone octamer containing two molecules each of H2A, H2B, H3 and H4 assembled in one H3-H4 heterotetramer and two H2A-H2B heterodimers. The octamer wraps approximately 147 bp of DNA. Acetylation at Lys-6 (H4K5ac), Lys-9 (H4K8ac), Lys-13 (H4K12ac) and Lys-17 (H4K16ac) occurs in coding regions of the genome but not in heterochromatin. Post-translationally, citrullination at Arg-4 (H4R3ci) by PADI4 impairs methylation. In terms of processing, monomethylation and asymmetric dimethylation at Arg-4 (H4R3me1 and H4R3me2a, respectively) by PRMT1 favors acetylation at Lys-9 (H4K8ac) and Lys-13 (H4K12ac). Demethylation is performed by JMJD6. Symmetric dimethylation on Arg-4 (H4R3me2s) by the PRDM1/PRMT5 complex may play a crucial role in the germ-cell lineage. Monomethylated, dimethylated or trimethylated at Lys-21 (H4K20me1, H4K20me2, H4K20me3). Monomethylation is performed by KMT5A/SET8. Trimethylation is performed by KMT5B and KMT5C and induces gene silencing. Monomethylated at Lys-13 (H4K12me1) by N6AMT1; H4K12me1 modification is present at the promoters of numerous genes encoding cell cycle regulators. Post-translationally, acetyl-methylated at Lys-6 and Lys-13 (H4K5acme and H4K12acme, respectively), acetyl-methylation is an epigenetic mark of active chromatin associated with increased transcriptional initiation. Acetyl-methylation is formed by acetylation by EP300/p300 of lysine residues that are already monomethylated on the same side chain. H4K5acme and H4K12acme marks specifically bind BRD2. In terms of processing, phosphorylated by pak2 at Ser-48 (H4S47ph). This phosphorylation increases the association of H3.3-H4 with the histone chaperone HIRA, thus promoting nucleosome assembly of H3.3-H4 and inhibiting nucleosome assembly of H3.1-H4. Ubiquitinated by the CUL4-DDB-RBX1 complex in response to ultraviolet irradiation. This may weaken the interaction between histones and DNA and facilitate DNA accessibility to repair proteins. Monoubiquitinated at Lys-92 of histone H4 (H4K91ub1) in response to DNA damage. The exact role of H4K91ub1 in DNA damage response is still unclear but it may function as a licensing signal for additional histone H4 post-translational modifications such as H4 Lys-21 methylation (H4K20me). Post-translationally, sumoylated, which is associated with transcriptional repression. In terms of processing, butyrylation of histones marks active promoters and competes with histone acetylation. Glutarylation at Lys-92 (H4K91glu) destabilizes nucleosomes by promoting dissociation of the H2A-H2B dimers from nucleosomes. Post-translationally, ufmylated; monofmylated by UFL1 at Lys-32 (H4K31Ufm1) in response to DNA damage. In terms of processing, lactylated in macrophages by EP300/P300 by using lactoyl-CoA directly derived from endogenous or exogenous lactate, leading to stimulates gene transcription. Delactylated by SIRT3 at Lys-17 (H4K16la).

Its subcellular location is the nucleus. The protein localises to the chromosome. Core component of nucleosome. Nucleosomes wrap and compact DNA into chromatin, limiting DNA accessibility to the cellular machineries which require DNA as a template. Histones thereby play a central role in transcription regulation, DNA repair, DNA replication and chromosomal stability. DNA accessibility is regulated via a complex set of post-translational modifications of histones, also called histone code, and nucleosome remodeling. The sequence is that of Histone H4 from Xenopus laevis (African clawed frog).